A 60-amino-acid chain; its full sequence is Metallothionein (60 aa).

Positions 1 to 28 are beta; sequence MDPCECSKGGTCNCGGSCTCTNCSCTTC. A divalent metal cation is bound by residues C4, C6, C12, C14, C18, C20, C23, C25, C28, C32, C33, C35, C36, C40, C43, C47, C49, C54, C58, and C59. Residues 29-60 form an alpha region; it reads KKSCCPCCPSGCPKCASGCVCKGKTCDAACCQ.

This sequence belongs to the metallothionein superfamily. Type 1 family.

Metallothioneins have a high content of cysteine residues that bind various heavy metals. The polypeptide is Metallothionein (mt) (Perca fluviatilis (European perch)).